The following is a 328-amino-acid chain: Pyruvate dehydrogenase E1 component subunit beta (328 aa).

Glu-60 is a binding site for thiamine diphosphate. Ile-113, Ile-162, and Asn-166 together coordinate K(+).

Heterodimer of an alpha and a beta chain. The cofactor is thiamine diphosphate.

The protein resides in the plastid. Its subcellular location is the chloroplast. The catalysed reaction is N(6)-[(R)-lipoyl]-L-lysyl-[protein] + pyruvate + H(+) = N(6)-[(R)-S(8)-acetyldihydrolipoyl]-L-lysyl-[protein] + CO2. In terms of biological role, the pyruvate dehydrogenase complex catalyzes the overall conversion of pyruvate to acetyl-CoA and CO(2). It contains multiple copies of three enzymatic components: pyruvate dehydrogenase (E1), dihydrolipoamide acetyltransferase (E2) and lipoamide dehydrogenase (E3). This Staurastrum punctulatum (Green alga) protein is Pyruvate dehydrogenase E1 component subunit beta (pdhB).